Reading from the N-terminus, the 394-residue chain is Elongation factor Tu (394 aa).

The tr-type G domain occupies 10–204 (KPHVNIGTIG…AVDSWIPLPE (195 aa)). Positions 19–26 (GHVDHGKT) are G1. 19–26 (GHVDHGKT) lines the GTP pocket. T26 is a Mg(2+) binding site. Residues 60-64 (GITIN) are G2. The G3 stretch occupies residues 81–84 (DCPG). GTP-binding positions include 81–85 (DCPGH) and 136–139 (NKCD). Residues 136–139 (NKCD) are G4. The segment at 174 to 176 (SGL) is G5.

It belongs to the TRAFAC class translation factor GTPase superfamily. Classic translation factor GTPase family. EF-Tu/EF-1A subfamily. In terms of assembly, monomer.

Its subcellular location is the cytoplasm. The enzyme catalyses GTP + H2O = GDP + phosphate + H(+). Functionally, GTP hydrolase that promotes the GTP-dependent binding of aminoacyl-tRNA to the A-site of ribosomes during protein biosynthesis. This is Elongation factor Tu from Ureaplasma parvum serovar 3 (strain ATCC 27815 / 27 / NCTC 11736).